We begin with the raw amino-acid sequence, 157 residues long: Serine-protein kinase RsbW (157 aa).

The protein belongs to the anti-sigma-factor family.

The enzyme catalyses L-seryl-[protein] + ATP = O-phospho-L-seryl-[protein] + ADP + H(+). It catalyses the reaction L-threonyl-[protein] + ATP = O-phospho-L-threonyl-[protein] + ADP + H(+). Its function is as follows. Negative regulator of sigma-B activity. Phosphorylates and inactivates its specific antagonist protein, RsbV. Upon phosphorylation of RsbV, RsbW is released and binds to sigma-B, thereby blocking its ability to form an RNA polymerase holoenzyme (E-sigma-B). This Listeria innocua serovar 6a (strain ATCC BAA-680 / CLIP 11262) protein is Serine-protein kinase RsbW.